The sequence spans 952 residues: Meiosis-specific coiled-coil domain-containing protein MEIOC (952 aa).

Disordered regions lie at residues 1 to 23 (MEVR…EGLE), 609 to 629 (QAKP…LDGL), and 933 to 952 (VHES…TNKH). Positions 617–627 (YDPEEGPKHLD) are enriched in basic and acidic residues. The span at 936-952 (SINSSNPMNQRGETNKH) shows a compositional bias: polar residues.

Interacts with YTHDC2; binds transcript that regulate the mitotic cell cycle inhibiting progression into metaphase, thereby allowing meiotic prophase to proceed normally. Interacts with RBM46. Expressed in fetal ovaries. Expressed in testis.

It is found in the cytoplasm. Its subcellular location is the nucleus. In terms of biological role, is required for meiosis completion in both male and female germ cells. Confers stability to numerous meiotic mRNAs in gonads allowing proper initiation and progression into meiosis prophase I. The function may involve YTHDC2 and is independent of induction by retinoic acid (RA). Maintains an extended meiotic prophase I by properly promoting the transition from a mitotic to a meiotic cell cycle program by binding transcripts through its interaction with YTHDC2 that regulate the mitotic cell cycle. The protein is Meiosis-specific coiled-coil domain-containing protein MEIOC of Homo sapiens (Human).